Reading from the N-terminus, the 85-residue chain is Coiled-coil-helix-coiled-coil-helix domain-containing protein 7 (85 aa).

A CHCH domain is found at 13–55; that stretch reads INPCLSESDASTRCLDENNYDRERCSTYFLRYKNCRRFWNSIV. 2 short sequence motifs (cx9C motif) span residues 16–26 and 37–47; these read CLSESDASTRC and CSTYFLRYKNC. 2 disulfide bridges follow: cysteine 16/cysteine 47 and cysteine 26/cysteine 37.

Belongs to the CHCHD7 family. In terms of assembly, monomer.

It is found in the mitochondrion intermembrane space. The sequence is that of Coiled-coil-helix-coiled-coil-helix domain-containing protein 7 (CHCHD7) from Homo sapiens (Human).